A 131-amino-acid polypeptide reads, in one-letter code: Holo-[acyl-carrier-protein] synthase (131 aa).

2 residues coordinate Mg(2+): D8 and E57.

It belongs to the P-Pant transferase superfamily. AcpS family. It depends on Mg(2+) as a cofactor.

The protein localises to the cytoplasm. The catalysed reaction is apo-[ACP] + CoA = holo-[ACP] + adenosine 3',5'-bisphosphate + H(+). In terms of biological role, transfers the 4'-phosphopantetheine moiety from coenzyme A to a Ser of acyl-carrier-protein. This is Holo-[acyl-carrier-protein] synthase from Desulforudis audaxviator (strain MP104C).